The following is a 590-amino-acid chain: MMRSVAVIGKKCLHRHTVLLKGNPRTTLCWERSFAGASSDDCRENLSRKVLQDLKLDDAIGLFGDMVKSRPFPSIVEFSKLLSAIAKMNKFDLVISLGEQMQNLGISHNLYTYSIFINYFCRRSQLSLALAILGKMMKLGYGPSIVTLNSLLNGFCHGNRISEAVALVDQMVEMGYQPDTVTFTTLVHGLFQHNKASEAVALVERMVVKGCQPDLVTYGAVINGLCKRGEPDLALNLLNKMEKGKIEADVVIYNTIIDGLCKYKHMDDAFDLFNKMETKGIKPDVFTYNPLISCLCNYGRWSDASRLLSDMLEKNINPDLVFFNALIDAFVKEGKLVEAEKLYDEMVKSKHCFPDVVAYNTLIKGFCKYKRVEEGMEVFREMSQRGLVGNTVTYTTLIHGFFQARDCDNAQMVFKQMVSDGVHPDIMTYNILLDGLCNNGNVETALVVFEYMQKRDMKLDIVTYTTMIEALCKAGKVEDGWDLFCSLSLKGVKPNVVTYTTMMSGFCRKGLKEEADALFVEMKEDGPLPNSGTYNTLIRARLRDGDEAASAELIKEMRSCGFAGDASTFGLVTNMLHDGRLDKSFLDMLS.

A mitochondrion-targeting transit peptide spans 1 to 34 (MMRSVAVIGKKCLHRHTVLLKGNPRTTLCWERSF). 14 PPR repeats span residues 74-108 (SIVE…GISH), 109-143 (NLYT…GYGP), 144-178 (SIVT…GYQP), 179-213 (DTVT…GCQP), 214-248 (DLVT…KIEA), 249-283 (DVVI…GIKP), 284-318 (DVFT…NINP), 319-353 (DLVF…KHCF), 355-389 (DVVA…GLVG), 390-424 (NTVT…GVHP), 425-459 (DIMT…DMKL), 460-494 (DIVT…GVKP), 495-529 (NVVT…GPLP), and 530-564 (NSGT…GFAG).

It belongs to the PPR family. P subfamily.

The protein localises to the mitochondrion. This Arabidopsis thaliana (Mouse-ear cress) protein is Pentatricopeptide repeat-containing protein At1g63070, mitochondrial.